An 83-amino-acid polypeptide reads, in one-letter code: Toxin BmKBT (83 aa).

The N-terminal stretch at 1-19 is a signal peptide; that stretch reads MKAALLLVIFSLMLIGVLT. The LCN-type CS-alpha/beta domain occupies 21-81; that stretch reads KSGYPTDHEG…TWSRATNKCR (61 aa). Disulfide bonds link cysteine 31–cysteine 80, cysteine 35–cysteine 54, cysteine 41–cysteine 61, and cysteine 45–cysteine 63. Position 83 (lysine 83) is a propeptide, removed by a carboxypeptidase.

It belongs to the long (4 C-C) scorpion toxin superfamily. Sodium channel inhibitor family. Beta subfamily. As to expression, expressed by the venom gland.

It is found in the secreted. Its function is as follows. This toxin increases the peak sodium current, slows down the inactivation of sodium channels (Nav), and prolongs the action potential of dorsal root ganglion neurons, which indicates that it behaves as a classical alpha-toxin. It binds to mammal brain and insect sodium channels, but with a different manner. This peptide may bind to a distinct receptor site on mammal brain sodium channels, which is unconnected with that for BmKAS (a beta-toxin), BmKIT2 (a beta-toxin) or BmK I (an alpha toxin). In contrast, the receptor site for BmKabT on insect sodium channels might be closely related to that for the beta-insect depressant toxin BmKIT2. Possesses potent toxicity in mice but induces only paralysis in cotton bollworm. The sequence is that of Toxin BmKBT from Olivierus martensii (Manchurian scorpion).